We begin with the raw amino-acid sequence, 212 residues long: Cytidylate kinase (212 aa).

9-17 (GPAAAGKGT) lines the ATP pocket.

It belongs to the cytidylate kinase family. Type 1 subfamily.

It localises to the cytoplasm. It carries out the reaction CMP + ATP = CDP + ADP. It catalyses the reaction dCMP + ATP = dCDP + ADP. This Rhizobium meliloti (strain 1021) (Ensifer meliloti) protein is Cytidylate kinase.